A 186-amino-acid polypeptide reads, in one-letter code: MEQPKDGAGPEGNNLSLPSSGTEPWPPAPLPAPPPLLLNSTDPTHLGLPESVASVTVPIRLDTLSCLLHSALLGAYTFQQALPSCPCCSQAGHSQPGAVRRPPRGRGGWEVRHRPGWGRGLHRRGLGRAEQPERGRAGGPGAGPRTPPMTLPSPPTLPAQDGKKEARGPEPPLETPLAAEDWETEY.

2 disordered regions span residues 1–42 (MEQP…NSTD) and 89–186 (SQAG…ETEY). The span at 13–22 (NNLSLPSSGT) shows a compositional bias: polar residues. A compositionally biased stretch (pro residues) spans 24-36 (PWPPAPLPAPPPL). Residues 114–126 (RPGWGRGLHRRGL) are compositionally biased toward basic residues. The span at 145 to 157 (RTPPMTLPSPPTL) shows a compositional bias: pro residues.

As to quaternary structure, interacts with SPOCD1.

Its subcellular location is the nucleus. The protein localises to the nucleoplasm. In terms of biological role, protein adapter involved in piRNA-directed transposon methylation by connecting PIWIL4-piRNA and DNA methylation machineries. The PIWIL4-piRNA pathway plays a central role during spermatogenesis by directing transposon DNA methylation and silencing, thereby preventing their mobilization, which is essential for the germline integrity. The sequence is that of piRNA-mediated silencing protein C19orf84 from Homo sapiens (Human).